The following is a 302-amino-acid chain: Cell division protein FtsQ (302 aa).

The disordered stretch occupies residues 1–41; it reads MPAVVRGGPPKPRRPRAEAPASPSKGKPAPRKAQPAAKLHA. Residues 1-50 are Cytoplasmic-facing; that stretch reads MPAVVRGGPPKPRRPRAEAPASPSKGKPAPRKAQPAAKLHAARGVGLSPT. Low complexity predominate over residues 18–38; the sequence is EAPASPSKGKPAPRKAQPAAK. Residues 51 to 71 form a helical membrane-spanning segment; the sequence is VALSVAGAALGLGLVVMLATG. Over 72 to 302 the chain is Periplasmic; the sequence is HRAERLGASM…LPGQPAADGA (231 aa). The POTRA domain occupies 94 to 162; it reads FRLKTVHIRG…DTVLIAVEER (69 aa).

It belongs to the FtsQ/DivIB family. FtsQ subfamily.

Its subcellular location is the cell inner membrane. In terms of biological role, essential cell division protein. This chain is Cell division protein FtsQ, found in Caulobacter vibrioides (strain ATCC 19089 / CIP 103742 / CB 15) (Caulobacter crescentus).